A 168-amino-acid chain; its full sequence is Mediator of RNA polymerase II transcription subunit 11 (168 aa).

The segment at 126–168 is disordered; the sequence is ETLENESNNEIQPKTESDTNQVETNENGNDINNKESEDIEMKE. Residues 130-156 are compositionally biased toward polar residues; it reads NESNNEIQPKTESDTNQVETNENGNDI. Positions 157 to 168 are enriched in basic and acidic residues; it reads NNKESEDIEMKE.

This sequence belongs to the Mediator complex subunit 11 family. In terms of assembly, component of the Mediator complex.

Its subcellular location is the nucleus. Component of the Mediator complex, a coactivator involved in the regulated transcription of nearly all RNA polymerase II-dependent genes. Mediator functions as a bridge to convey information from gene-specific regulatory proteins to the basal RNA polymerase II transcription machinery. Mediator is recruited to promoters by direct interactions with regulatory proteins and serves as a scaffold for the assembly of a functional pre-initiation complex with RNA polymerase II and the general transcription factors. This is Mediator of RNA polymerase II transcription subunit 11 (MED11) from Candida albicans (strain SC5314 / ATCC MYA-2876) (Yeast).